The following is a 64-amino-acid chain: Large ribosomal subunit protein bL33c (64 aa).

It belongs to the bacterial ribosomal protein bL33 family.

It localises to the plastid. It is found in the chloroplast. The chain is Large ribosomal subunit protein bL33c (rpl33) from Trieres chinensis (Marine centric diatom).